The primary structure comprises 222 residues: DNA ADP-ribosyl transferase (222 aa).

Residues threonine 12–tyrosine 209 enclose the DarT domain. Residues histidine 16 to threonine 18, glycine 25, and leucine 33 contribute to the NAD(+) site. Residues arginine 38 to glutamine 56 form an NAD(+)-binding element region. The DNA-binding element occupies tyrosine 47 to histidine 53. An NAD(+)-binding site is contributed by arginine 54. Arginine 54 serves as the catalytic Proton acceptor. DNA-binding regions lie at residues arginine 78–tyrosine 83, serine 148–alanine 151, and arginine 154–glutamine 158. Positions threonine 119–glutamate 160 are ADP-ribosylating turn-turn loop. Glutamate 160 is a catalytic residue.

Belongs to the DarT ADP-ribosyltransferase family. Interacts with cognate antitoxin DarG (via C-terminus); this heterodimeric complex neutralizes the toxic effect of DarT by preventing ssDNA binding to DarT and consequently inactivating the toxin by direct protein-protein interactions.

The catalysed reaction is a thymidine in DNA + NAD(+) = an N-(ADP-alpha-D-ribosyl)-thymidine in DNA + nicotinamide + H(+). Toxic component of the hybrid type II/IV toxin-antitoxin (TA) system DarTG, which plays a crucial role in controlling bacterial growth and bacteriophage infection. Its toxic effect is neutralized by cognate antitoxin DarG. In case of phage infection, DarT toxin ADP-ribosylates DNA, which inhibits both viral DNA and RNA synthesis and leads to abortive infection. ADP-ribosylates ssDNA on the second thymidine of the consensus sequence 5'-TNTC-3'; the protein does not auto-modify. Has no activity on dsDNA in vitro. This leads to a decrease in DNA replication. Upon expression in E.coli inhibits cell growth, colony formation and induces the SOS response. Expression leads to bacteriostasis; however if cells grow over an hour in the presence of toxin, growth is no longer restored on antitoxin-inducing plates. In E.coli ADP-ribosylates genomic DNA (gDNA), which induces RecA expression (a marker for DNA damage). The polypeptide is DNA ADP-ribosyl transferase (Thermus aquaticus (strain ATCC BAA-2747 / Y51MC23)).